The primary structure comprises 1064 residues: Protein NLRC3 (1064 aa).

In terms of domain architecture, NACHT spans 138–459 (RVSLTIGVAG…YCFIHLSLQE (322 aa)). 144–151 (GVAGVGKT) is an ATP binding site. LRR repeat units lie at residues 338-362 (LGHLYRTRLAVQDIELPLPQTLCEL), 570-593 (LSELRHTELACSVEEAMRSGTLAG), 632-662 (LPQLLYCQSLRLDNNQFQDPVMELLGSVLSG), 664-687 (DCRIRKISLAENQIGNKGAKALAR), 692-715 (NRSLITLDLRSNSIGPPGAKALAD), 720-743 (NRTLTSLSLQSNVIKDDGVMCVAE), 748-771 (NQTISMLQLQKNLIGLIGAQQMAD), 776-799 (NRSLKALMFSSNTIGDRGAIALAE), 804-827 (NQILENLDLQSNSISDMGVTVLMR), 832-855 (NQTLSSLNLRENSISPEGAQALTQ), 860-883 (NNTLKHLDLTANLLHDRGAQAIAV), 888-911 (NHSLTHLHLQWNFIQAGAARALGQ), 916-939 (NRTLTTLDLQENAIGDEGASSVAG), 972-995 (NRTLEILDLRGNDVGAAGAKALAN), 1000-1022 (NSSLRRLNLQENSLGMDGAIFVA), and 1028-1051 (NHGLHHINLQGNPIGESAARMISE).

Belongs to the NLRP family. Directly interacts (via CARD) with TMEM173/STING; this interaction reduces TMEM173 trafficking to the perinuclear region in response to interferon stimulatory DNA. Also interacts, but to a lesser extent, with TBK1. Interacts with TRAF6; this interaction results in decreased TRAF6 'Lys-63'-linked polyubiquitination, but leaves 'Lys-48'-linked chains unchanged, promoting TRAF6 protein degradation. Interacts with PIK3R1/PIK3R2; this interaction disrupts the association between PIK3R1/PIK3R2 and the p110 catalytic subunit PIK3CA/PIK3CB/PIK3CD and reduces PIK3R1/PIK3R2 activation. Weakly interacts with PYCARD/ASC. Interacts with CASP1 and CASP5. As to expression, expressed in bone marrow-derived macrophages.

The protein resides in the cytoplasm. Functionally, negative regulator of the innate immune response. Attenuates signaling pathways activated by Toll-like receptors (TLRs) and the DNA sensor STING/TMEM173 in response to pathogen-associated molecular patterns, such as intracellular poly(dA:dT), but not poly(I:C), or in response to DNA virus infection, including that of Herpes simplex virus 1 (HSV1). May affect TLR4 signaling by acting at the level of TRAF6 ubiquitination, decreasing the activating 'Lys-63'-linked ubiquitination and leaving unchanged the degradative 'Lys-48'-linked ubiquitination. Inhibits the PI3K-AKT-mTOR pathway possibly by directly interacting with the posphatidylinositol 3-kinase regulatory subunit p85 (PIK3R1/PIK3R2) and disrupting the association between PIK3R1/PIK3R2 and the catalytic subunit p110 (PIK3CA/PIK3CB/PIK3CD) and reducing PIK3R1/PIK3R2 activation. Via its regulation of the PI3K-AKT-mTOR pathway, controls cell proliferation, predominantly in intestinal epithelial cells. May also affect NOD1- or NOD2-mediated NF-kappa-B activation. Might also affect the inflammatory response by preventing NLRP3 inflammasome formation, CASP1 cleavage and IL1B maturation. This is Protein NLRC3 (Nlrc3) from Mus musculus (Mouse).